A 740-amino-acid polypeptide reads, in one-letter code: 1,4-alpha-glucan branching enzyme GlgB (740 aa).

The active-site Nucleophile is Asp-414. Catalysis depends on Glu-467, which acts as the Proton donor.

This sequence belongs to the glycosyl hydrolase 13 family. GlgB subfamily. In terms of assembly, monomer.

It catalyses the reaction Transfers a segment of a (1-&gt;4)-alpha-D-glucan chain to a primary hydroxy group in a similar glucan chain.. It functions in the pathway glycan biosynthesis; glycogen biosynthesis. In terms of biological role, catalyzes the formation of the alpha-1,6-glucosidic linkages in glycogen by scission of a 1,4-alpha-linked oligosaccharide from growing alpha-1,4-glucan chains and the subsequent attachment of the oligosaccharide to the alpha-1,6 position. The polypeptide is 1,4-alpha-glucan branching enzyme GlgB (Rhodospirillum rubrum (strain ATCC 11170 / ATH 1.1.1 / DSM 467 / LMG 4362 / NCIMB 8255 / S1)).